We begin with the raw amino-acid sequence, 121 residues long: UPF0102 protein XF_0554 (121 aa).

The protein belongs to the UPF0102 family.

This is UPF0102 protein XF_0554 from Xylella fastidiosa (strain 9a5c).